A 198-amino-acid chain; its full sequence is Putative transposase InsO for insertion sequence element IS911B (198 aa).

Positions 105–198 constitute an Integrase catalytic domain; the sequence is AVTEPNQVWC…YCGDTGSGRV (94 aa).

In terms of biological role, involved in the transposition of the insertion sequence IS911B. This Escherichia coli (strain K12) protein is Putative transposase InsO for insertion sequence element IS911B (insO2).